Reading from the N-terminus, the 774-residue chain is Ion-translocating oxidoreductase complex subunit C (774 aa).

4Fe-4S ferredoxin-type domains lie at 368-398 and 408-437; these read ELTS…QQLQ and KCEE…VQYY. 8 residues coordinate [4Fe-4S] cluster: Cys-378, Cys-381, Cys-384, Cys-388, Cys-417, Cys-420, Cys-423, and Cys-427. Basic and acidic residues predominate over residues 459–490; the sequence is ARFEEKKARMERDKAERENRFKQAAEDRRKEM. 2 disordered regions span residues 459 to 496 and 533 to 774; these read ARFE…QGGS and AKQA…EEKD. The span at 533 to 545 shows a compositional bias: low complexity; sequence AKQAEAAQSGASE. Residues 550-572 are compositionally biased toward basic and acidic residues; sequence EMAKLREERKRQARERKAQKGEV. Residues 605-618 show a composition bias toward low complexity; sequence TESAAQPAQATPSS. Polar residues-rich tracts occupy residues 645–658, 686–698, 725–738, and 762–774; these read TEST…TPSS, ESAA…TPSS, TESA…TPSS, and QQSS…EEKD.

This sequence belongs to the 4Fe4S bacterial-type ferredoxin family. RnfC subfamily. As to quaternary structure, the complex is composed of six subunits: RnfA, RnfB, RnfC, RnfD, RnfE and RnfG. [4Fe-4S] cluster serves as cofactor.

The protein resides in the cell inner membrane. Part of a membrane-bound complex that couples electron transfer with translocation of ions across the membrane. This chain is Ion-translocating oxidoreductase complex subunit C, found in Vibrio cholerae serotype O1 (strain ATCC 39315 / El Tor Inaba N16961).